A 312-amino-acid chain; its full sequence is NADPH-dependent alpha-keto amide reductase (312 aa).

Residues G25, T26, R27, and D59 each coordinate NADPH. Catalysis depends on proton donor residues Y64 and H122. At S123 the chain carries Phosphoserine. Positions 157, 179, 208, 210, 257, 258, 259, 260, 261, and 264 each coordinate NADPH.

It belongs to the aldo/keto reductase family. In terms of assembly, monomer. In terms of processing, the N-terminus is blocked.

The protein localises to the cytoplasm. It localises to the nucleus. Reduces aromatic alpha-keto amides, aliphatic and aromatic alpha-keto esters, but not beta-keto esters. The protein is NADPH-dependent alpha-keto amide reductase of Saccharomyces cerevisiae (strain ATCC 204508 / S288c) (Baker's yeast).